The following is a 677-amino-acid chain: Methionine--tRNA ligase (677 aa).

Residues 15–25 (PYANGSIHLGH) carry the 'HIGH' region motif. The Zn(2+) site is built by C146, C149, C159, and C162. Positions 333-337 (KMSKS) match the 'KMSKS' region motif. K336 provides a ligand contact to ATP. Residues 575 to 677 (DFAKVDLRVA…DGAKPGQQVK (103 aa)) enclose the tRNA-binding domain.

This sequence belongs to the class-I aminoacyl-tRNA synthetase family. MetG type 1 subfamily. As to quaternary structure, homodimer. It depends on Zn(2+) as a cofactor.

It localises to the cytoplasm. It carries out the reaction tRNA(Met) + L-methionine + ATP = L-methionyl-tRNA(Met) + AMP + diphosphate. Functionally, is required not only for elongation of protein synthesis but also for the initiation of all mRNA translation through initiator tRNA(fMet) aminoacylation. The sequence is that of Methionine--tRNA ligase from Salmonella arizonae (strain ATCC BAA-731 / CDC346-86 / RSK2980).